The chain runs to 502 residues: Probable cytochrome P450 554A1 (502 aa).

A helical membrane pass occupies residues Leu-3–Tyr-20. Cys-448 contacts heme.

It belongs to the cytochrome P450 family. Heme serves as cofactor.

The protein localises to the membrane. This chain is Probable cytochrome P450 554A1 (cyp554A1), found in Dictyostelium discoideum (Social amoeba).